The following is a 302-amino-acid chain: Heat stress transcription factor B-1 (302 aa).

Residues 1–15 (MAAAEAAAAVGKQQQ) are compositionally biased toward low complexity. Disordered regions lie at residues 1–33 (MAAA…PFLT) and 116–184 (GIRR…RKDN). Residues 16–28 (KGGGGRGGGGGGP) show a composition bias toward gly residues. The segment covering 123–133 (TTPQSSKSCGS) has biased composition (polar residues). A compositionally biased stretch (pro residues) spans 139–150 (FPPPLPPLPPEP). A compositionally biased stretch (low complexity) spans 151-172 (SATTSSGNDRSSSSASSPPRAD). The stretch at 170–202 (RADITSENEQLRKDNQTLTMELARARRHCEELL) forms a coiled coil. Residues 180–209 (LRKDNQTLTMELARARRHCEELLGFLSRFL) form a hydrophobic repeat HR-A/B region. The Nuclear export signal motif lies at 211–218 (VRQLDLRL). Residues 263–267 (RKRAR) carry the Nuclear localization signal motif.

This sequence belongs to the HSF family. Class B subfamily. Homotrimer. In terms of processing, exhibits temperature-dependent phosphorylation.

It is found in the cytoplasm. The protein resides in the nucleus. Functionally, transcriptional regulator that specifically binds DNA of heat shock promoter elements (HSE). The sequence is that of Heat stress transcription factor B-1 (HSFB1) from Oryza sativa subsp. japonica (Rice).